The following is a 196-amino-acid chain: Pycsar effector protein GmPycTM (196 aa).

3 consecutive transmembrane segments (helical) span residues 34-54 (ISFSLAFAGILLGGFFSSGII), 82-102 (ITTIVLVVFIILMIVSLTYLF), and 176-196 (VNWLIASTIVFIILNGMFLFL).

Its subcellular location is the cell inner membrane. Pycsar (pyrimidine cyclase system for antiphage resistance) provides immunity against bacteriophage. The pyrimidine cyclase (PycC) synthesizes cyclic nucleotides in response to infection; these serve as specific second messenger signals. The signals activate the adjacent effector, leading to bacterial cell death and abortive phage infection. A clade C Pycsar system. In terms of biological role, the effector gene of a two-gene Pycsar system. Expression of this and adjacent uridylate cyclase GmPycC (AC P0DV42) probably confers resistance to bacteriophage. The genes are probably only expressed in response to bacteriophage infection. Probably only responds to cUMP (produced by its cognate NTP cyclase), acts by impairing membrane integrity. The sequence is that of Pycsar effector protein GmPycTM from Gulbenkiania mobilis.